Here is an 87-residue protein sequence, read N- to C-terminus: MANIKSQKKRILTNEKARQRNQAIRSAVRTEIRKFRAAVAAGDKAAAEAQLRVASRALDKSVTKGVFHRNNAANKKSNMAHALNKMA.

Belongs to the bacterial ribosomal protein bS20 family.

Binds directly to 16S ribosomal RNA. The chain is Small ribosomal subunit protein bS20 from Corynebacterium diphtheriae (strain ATCC 700971 / NCTC 13129 / Biotype gravis).